Consider the following 308-residue polypeptide: Zinc finger CCCH domain-containing protein 15 (308 aa).

The segment at 1–21 is disordered; it reads MENKIAPFSYSGSSAGNSSSG. Residues 9 to 21 are compositionally biased toward low complexity; that stretch reads SYSGSSAGNSSSG. A coiled-coil region spans residues 56–91; the sequence is TRLHEASLEAEALRLENTELRSMNLRLKNELNSLIR. The disordered stretch occupies residues 110-190; sequence LSIGGNDADE…GTVTKPGTCG (81 aa). The residue at position 111 (S111) is a Phosphoserine. Residues 148 to 164 are compositionally biased toward polar residues; that stretch reads RSSLPKSISVRSNGYSK. 2 C3H1-type zinc fingers span residues 222–250 and 260–288; these read MTKTELCNKWQETGTCPYGDHCQFAHGIK and RYKTEVCRMVLAGDNCPYGHRCHFRHSLS.

In terms of processing, phosphorylated at Ser-111 by ASK7/BIN2 in the cytoplasm in the absence of brassinosteroids (BRs). As to expression, highly expressed in secondary cell wall-forming tissues and the xylem cells of roots. Expressed predominantly in inflorescence stems, flowers and siliques. Highly expressed in the basal portion of stems, where cells are undergoing secondary cell wall thickening. Highly expressed in meiocytes and tapetum from anthers.

The protein resides in the cytoplasm. It is found in the nucleus. Functionally, functions probably as a transcriptional factor that activates genes involved in secondary cell wall biosynthesis. Functions redudantly with C3H14 to regulate secondary cell wall formation. C3H14 and C3H15 have overlapping roles in the regulation of secondary cell wall formation and anther development. C3H14 may contribute more to secondary cell wall thickening while C3H15 could be more important in anther development. May regulate at both the transcriptional and post-transcriptional levels the expression of many genes involved in various biological processes, particularly those associated with cell wall metabolism and pollen development. Involved in the regulation of callose metabolism in male meiocytes, in integrity of newly formed microspores, and promotes male fertility. May be involved in the regulation of the callose synthesis genes CALS5 and CALS12, the potential degradation of callose walls-related genes A6 and MYB80, as well as other putative beta-1,3-glucanase genes. Negatively regulates cell elongation by inhibiting brassinosteroid (BR) signaling. Functions downstream of the BRI1 receptor as a negative regulator in the BR pathway. This Arabidopsis thaliana (Mouse-ear cress) protein is Zinc finger CCCH domain-containing protein 15.